A 440-amino-acid polypeptide reads, in one-letter code: Beta-1,3-galactosyl-O-glycosyl-glycoprotein beta-1,6-N-acetylglucosaminyltransferase 3 (440 aa).

The Cytoplasmic portion of the chain corresponds to 1–12; it reads MKMTGWKKKLCR. A helical; Signal-anchor for type II membrane protein transmembrane segment spans residues 13–30; sequence GHHLWALGCYMLLAVVAL. Topologically, residues 31–440 are lumenal; it reads RLSLRLKCDV…RHKAIYGTEL (410 aa). 4 disulfide bridges follow: Cys-73-Cys-230, Cys-164-Cys-384, Cys-185-Cys-212, and Cys-393-Cys-425. An N-linked (GlcNAc...) asparagine glycan is attached at Asn-108.

It belongs to the glycosyltransferase 14 family. In terms of processing, N-glycosylated.

It localises to the golgi apparatus membrane. The catalysed reaction is a 3-O-[beta-D-galactosyl-(1-&gt;3)-N-acetyl-alpha-D-galactosaminyl]-L-seryl-[protein] + UDP-N-acetyl-alpha-D-glucosamine = 3-O-{beta-D-galactosyl-(1-&gt;3)-[N-acetyl-beta-D-glucosaminyl-(1-&gt;6)]-N-acetyl-alpha-D-galactosaminyl}-L-seryl-[protein] + UDP + H(+). The enzyme catalyses a 3-O-[beta-D-galactosyl-(1-&gt;3)-N-acetyl-alpha-D-galactosaminyl]-L-threonyl-[protein] + UDP-N-acetyl-alpha-D-glucosamine = a 3-O-{beta-D-galactosyl-(1-&gt;3)-[N-acetyl-beta-D-glucosaminyl-(1-&gt;6)]-N-acetyl-alpha-D-galactosaminyl}-L-threonyl-[protein] + UDP + H(+). It carries out the reaction a beta-D-Gal-(1-&gt;4)-beta-D-GlcNAc-(1-&gt;3)-beta-D-Gal-(1-&gt;4)-beta-D-GlcNAc derivative + UDP-N-acetyl-alpha-D-glucosamine = a beta-D-Gal-(1-&gt;4)-beta-D-GlcNAc-(1-&gt;3)-[beta-D-GlcNAc-(1-&gt;6)]-beta-D-Gal-(1-&gt;4)-N-acetyl-beta-D-glucosaminyl derivative + UDP + H(+). It catalyses the reaction 3-O-[N-acetyl-beta-D-glucosaminyl-(1-&gt;3)-N-acetyl-alpha-D-galactosaminyl]-L-seryl-[protein] + UDP-N-acetyl-alpha-D-glucosamine = 3-O-[N-acetyl-beta-D-glucosaminyl-(1-&gt;3)-[N-acetyl-beta-D-glucosaminyl-(1-&gt;6)]-N-acetyl-alpha-D-galactosaminyl]-L-seryl-[protein] + UDP + H(+). The catalysed reaction is a 3-O-[N-acetyl-beta-D-glucosaminyl-(1-&gt;3)-N-acetyl-alpha-D-galactosaminyl]-L-threonyl-[protein] + UDP-N-acetyl-alpha-D-glucosamine = 3-O-[N-acetyl-beta-D-glucosaminyl-(1-&gt;3)-[N-acetyl-beta-D-glucosaminyl-(1-&gt;6)]-N-acetyl-alpha-D-galactosaminyl]-L-threonyl-[protein] + UDP + H(+). Its pathway is protein modification; protein glycosylation. Glycosyltransferase that can synthesize all known mucin beta 6 N-acetylglucosaminides. Mediates core 2 and core 4 O-glycan branching, 2 important steps in mucin-type biosynthesis. Also has I-branching enzyme activity by converting linear into branched poly-N-acetyllactosaminoglycans, leading to introduce the blood group I antigen during embryonic development. In Ovis aries (Sheep), this protein is Beta-1,3-galactosyl-O-glycosyl-glycoprotein beta-1,6-N-acetylglucosaminyltransferase 3 (GCNT3).